Consider the following 200-residue polypeptide: GTP cyclohydrolase-2 (200 aa).

50–54 (RVHSE) serves as a coordination point for GTP. Residues cysteine 55, cysteine 66, and cysteine 68 each contribute to the Zn(2+) site. GTP contacts are provided by residues glutamine 71, 93 to 95 (EGR), and threonine 115. Catalysis depends on aspartate 127, which acts as the Proton acceptor. The Nucleophile role is filled by arginine 129. Threonine 150 and lysine 155 together coordinate GTP.

It belongs to the GTP cyclohydrolase II family. The cofactor is Zn(2+).

The enzyme catalyses GTP + 4 H2O = 2,5-diamino-6-hydroxy-4-(5-phosphoribosylamino)-pyrimidine + formate + 2 phosphate + 3 H(+). Its pathway is cofactor biosynthesis; riboflavin biosynthesis; 5-amino-6-(D-ribitylamino)uracil from GTP: step 1/4. In terms of biological role, catalyzes the conversion of GTP to 2,5-diamino-6-ribosylamino-4(3H)-pyrimidinone 5'-phosphate (DARP), formate and pyrophosphate. The polypeptide is GTP cyclohydrolase-2 (Acinetobacter baumannii (strain SDF)).